A 351-amino-acid chain; its full sequence is Mitogen-activated protein kinase 2 (351 aa).

The Protein kinase domain occupies 16 to 304 (YEILDVIGEG…AEEALQHNYL (289 aa)). Residues 22–30 (IGEGAYGIV) and lysine 45 contribute to the ATP site. Residue aspartate 140 is the Proton acceptor of the active site. Threonine 176 carries the post-translational modification Phosphothreonine. The TXY motif lies at 176 to 178 (TEY). The residue at position 178 (tyrosine 178) is a Phosphotyrosine.

This sequence belongs to the protein kinase superfamily. CMGC Ser/Thr protein kinase family. MAP kinase subfamily. Mg(2+) serves as cofactor. The cofactor is Mn(2+). In terms of processing, dually phosphorylated on Thr-176 and Tyr-178, which activates the enzyme.

It is found in the nucleus. It carries out the reaction L-seryl-[protein] + ATP = O-phospho-L-seryl-[protein] + ADP + H(+). The enzyme catalyses L-threonyl-[protein] + ATP = O-phospho-L-threonyl-[protein] + ADP + H(+). Its activity is regulated as follows. Activated by tyrosine and threonine phosphorylation. Inhibited by the MEK inhibitor U0126 but not by the p38 inhibitor SB203580. Cobalt abolishes kinase activity, while calcium, copper and nickel have little effect on kinase activity. Its function is as follows. Serine-threonine protein kinase which may be involved in pheromone signaling. Functionally complements the MAPK pheromone signaling pathway in S.cerevisiae. This Pneumocystis carinii protein is Mitogen-activated protein kinase 2.